Reading from the N-terminus, the 1400-residue chain is DNA-directed RNA polymerase subunit beta' (1400 aa).

Residues Cys-71, Cys-73, Cys-86, and Cys-89 each contribute to the Zn(2+) site. Mg(2+) contacts are provided by Asp-462, Asp-464, and Asp-466. Zn(2+) is bound by residues Cys-811, Cys-885, Cys-892, and Cys-895.

Belongs to the RNA polymerase beta' chain family. As to quaternary structure, the RNAP catalytic core consists of 2 alpha, 1 beta, 1 beta' and 1 omega subunit. When a sigma factor is associated with the core the holoenzyme is formed, which can initiate transcription. It depends on Mg(2+) as a cofactor. Zn(2+) is required as a cofactor.

It catalyses the reaction RNA(n) + a ribonucleoside 5'-triphosphate = RNA(n+1) + diphosphate. Functionally, DNA-dependent RNA polymerase catalyzes the transcription of DNA into RNA using the four ribonucleoside triphosphates as substrates. The protein is DNA-directed RNA polymerase subunit beta' of Brucella melitensis biotype 1 (strain ATCC 23456 / CCUG 17765 / NCTC 10094 / 16M).